Consider the following 302-residue polypeptide: Cardiolipin synthase (CMP-forming) (302 aa).

The segment at 65–84 (PRTHCSGAGKAAPEPAAGGD) is disordered. Residues 71 to 84 (GAGKAAPEPAAGGD) show a composition bias toward low complexity. A run of 5 helical transmembrane segments spans residues 109-129 (IPNL…YLIL), 133-153 (FNVA…DGFI), 190-212 (IPVP…VFYV), 250-270 (LILV…SIYL), and 271-289 (QILW…YSYY).

It belongs to the CDP-alcohol phosphatidyltransferase class-I family. The cofactor is a divalent metal cation.

It localises to the mitochondrion inner membrane. It catalyses the reaction a CDP-1,2-diacyl-sn-glycerol + a 1,2-diacyl-sn-glycero-3-phospho-(1'-sn-glycerol) = a cardiolipin + CMP + H(+). In terms of biological role, catalyzes the synthesis of cardiolipin (CL) (diphosphatidylglycerol) by specifically transferring a phosphatidyl group from CDP-diacylglycerol to phosphatidylglycerol (PG). CL is a key phospholipid in mitochondrial membranes and plays important roles in maintaining the functional integrity and dynamics of mitochondria under both optimal and stress conditions. This is Cardiolipin synthase (CMP-forming) (Crls1) from Rattus norvegicus (Rat).